The primary structure comprises 40 residues: uncharacterized protein (40 aa).

The first 27 residues, methionine 1–phenylalanine 27, serve as a signal peptide directing secretion.

This is an uncharacterized protein from Archaeoglobus fulgidus (strain ATCC 49558 / DSM 4304 / JCM 9628 / NBRC 100126 / VC-16).